Here is a 396-residue protein sequence, read N- to C-terminus: Purine ribonucleoside efflux pump NepI (396 aa).

Residues methionine 1–alanine 21 are Cytoplasmic-facing. A helical membrane pass occupies residues valine 22–leucine 42. At leucine 43–glutamate 54 the chain is on the periplasmic side. A helical membrane pass occupies residues glycine 55 to isoleucine 75. At threonine 76–arginine 85 the chain is on the cytoplasmic side. Residues asparagine 86–asparagine 106 form a helical membrane-spanning segment. Serine 107 is a topological domain (periplasmic). The helical transmembrane segment at phenylalanine 108 to methionine 128 threads the bilayer. Residues serine 129–serine 147 lie on the Cytoplasmic side of the membrane. Residues valine 148–glycine 168 form a helical membrane-spanning segment. The Periplasmic segment spans residues glutamate 169–asparagine 175. A helical membrane pass occupies residues valine 176–proline 196. The Cytoplasmic segment spans residues serine 197–arginine 215. A helical transmembrane segment spans residues proline 216–phenylalanine 236. The Periplasmic portion of the chain corresponds to threonine 237–threonine 255. The helical transmembrane segment at leucine 256–leucine 276 threads the bilayer. Over lysine 277–lysine 281 the chain is Cytoplasmic. Residues leucine 282 to glycine 302 form a helical membrane-spanning segment. At serine 303–lysine 305 the chain is on the periplasmic side. The chain crosses the membrane as a helical span at residues isoleucine 306–tryptophan 326. At serine 327–serine 343 the chain is on the cytoplasmic side. The helical transmembrane segment at isoleucine 344–leucine 364 threads the bilayer. Topologically, residues aspartate 365–asparagine 366 are periplasmic. Residues isoleucine 367–valine 387 traverse the membrane as a helical segment. Over threonine 388–serine 396 the chain is Cytoplasmic.

Belongs to the major facilitator superfamily. DHA1 family. NepI (TC 2.A.1.2.26) subfamily.

The protein localises to the cell inner membrane. It carries out the reaction inosine(in) + H(+)(out) = inosine(out) + H(+)(in). The enzyme catalyses guanosine(in) + H(+)(out) = guanosine(out) + H(+)(in). Functionally, involved in the efflux of purine ribonucleosides, such as inosine and guanosine. This is Purine ribonucleoside efflux pump NepI from Shigella sonnei (strain Ss046).